Here is a 232-residue protein sequence, read N- to C-terminus: Large ribosomal subunit protein uL1 (232 aa).

The protein belongs to the universal ribosomal protein uL1 family. Part of the 50S ribosomal subunit.

In terms of biological role, binds directly to 23S rRNA. The L1 stalk is quite mobile in the ribosome, and is involved in E site tRNA release. Protein L1 is also a translational repressor protein, it controls the translation of the L11 operon by binding to its mRNA. This chain is Large ribosomal subunit protein uL1, found in Burkholderia ambifaria (strain MC40-6).